Here is a 526-residue protein sequence, read N- to C-terminus: DDB1- and CUL4-associated factor 17 (526 aa).

2 helical membrane-spanning segments follow: residues I200 to I220 and G237 to V257.

The protein localises to the membrane. The protein resides in the nucleus. It localises to the nucleolus. It participates in protein modification; protein ubiquitination. May function as a substrate receptor for CUL4-DDB1 E3 ubiquitin-protein ligase complex. This chain is DDB1- and CUL4-associated factor 17 (dcaf17), found in Danio rerio (Zebrafish).